The chain runs to 240 residues: Phosphoenolpyruvate guanylyltransferase (240 aa).

3 residues coordinate phosphoenolpyruvate: Thr-161, Gly-178, and Ser-181.

This sequence belongs to the CofC family.

It catalyses the reaction phosphoenolpyruvate + GTP + H(+) = enolpyruvoyl-2-diphospho-5'-guanosine + diphosphate. It functions in the pathway cofactor biosynthesis; coenzyme F420 biosynthesis. Its function is as follows. Guanylyltransferase that catalyzes the activation of phosphoenolpyruvate (PEP) as enolpyruvoyl-2-diphospho-5'-guanosine, via the condensation of PEP with GTP. It is involved in the biosynthesis of coenzyme F420, a hydride carrier cofactor. In Rhodococcus opacus (strain B4), this protein is Phosphoenolpyruvate guanylyltransferase.